A 460-amino-acid chain; its full sequence is UDP-N-acetylmuramate--L-alanine ligase (460 aa).

119–125 is a binding site for ATP; that stretch reads GSHGKTT.

Belongs to the MurCDEF family.

The protein localises to the cytoplasm. The catalysed reaction is UDP-N-acetyl-alpha-D-muramate + L-alanine + ATP = UDP-N-acetyl-alpha-D-muramoyl-L-alanine + ADP + phosphate + H(+). It functions in the pathway cell wall biogenesis; peptidoglycan biosynthesis. Its function is as follows. Cell wall formation. The protein is UDP-N-acetylmuramate--L-alanine ligase of Alkaliphilus metalliredigens (strain QYMF).